The chain runs to 439 residues: Methionine aminopeptidase 2-2 (439 aa).

The segment at methionine 1–proline 90 is disordered. A compositionally biased stretch (basic and acidic residues) spans glutamate 10–proline 23. A compositionally biased stretch (acidic residues) spans aspartate 35–aspartate 45. A compositionally biased stretch (basic residues) spans alanine 54–asparagine 68. Histidine 192 contacts substrate. 3 residues coordinate a divalent metal cation: aspartate 212, aspartate 223, and histidine 292. Histidine 300 lines the substrate pocket. Residues glutamate 325 and glutamate 420 each coordinate a divalent metal cation.

Belongs to the peptidase M24A family. Methionine aminopeptidase eukaryotic type 2 subfamily. Requires Co(2+) as cofactor. Zn(2+) serves as cofactor. Mn(2+) is required as a cofactor. It depends on Fe(2+) as a cofactor.

It localises to the cytoplasm. It carries out the reaction Release of N-terminal amino acids, preferentially methionine, from peptides and arylamides.. Cotranslationally removes the N-terminal methionine from nascent proteins. The N-terminal methionine is often cleaved when the second residue in the primary sequence is small and uncharged (Met-Ala-, Cys, Gly, Pro, Ser, Thr, or Val). This is Methionine aminopeptidase 2-2 from Chaetomium globosum (strain ATCC 6205 / CBS 148.51 / DSM 1962 / NBRC 6347 / NRRL 1970) (Soil fungus).